The primary structure comprises 515 residues: Bifunctional solanapyrone synthase (515 aa).

An N-terminal signal peptide occupies residues 1–25 (MRLIILNLLSLGITPSVVGHSGPHR). Residue Asn66 is glycosylated (N-linked (GlcNAc...) asparagine). Residues 91-261 (APKNPACIYT…THIVQRTYPL (171 aa)) form the FAD-binding PCMH-type domain. Position 128 is a pros-8alpha-FAD histidine (His128). N-linked (GlcNAc...) asparagine glycosylation is found at Asn274 and Asn355.

The protein belongs to the oxygen-dependent FAD-linked oxidoreductase family. Requires FAD as cofactor.

The enzyme catalyses prosolanapyrone II + O2 = prosolanapyrone III + H2O2. The catalysed reaction is prosolanapyrone III = (-)-solanapyrone A. It carries out the reaction prosolanapyrone III = solanapyrone D. It participates in phytotoxin biosynthesis. Functionally, bifunctional solanapyrone synthase; part of the gene cluster that mediates the biosynthesis of the phytotoxin solanapyrone, a causal agent of early blight disease of potato and tomato. The prosolanapyrone synthase sol1 is a polyketide synthase that produces the octaketide desmethylprosolanapyrone I via sequential condensations of 7 malonyl-CoA units with one acetyl-CoA unit, and one methylation step. The octaketide backbone is further methylated by the sol2 O-methyltransferase to yield prosolanapyrone I. Prosolanapyrone I is hydroxylated to prosolanapyrone II by the cytochrome P450 monooxygenase sol6. The solanapyrone synthase sol5 then catalyzes the oxidation of prosolanapyrone II and the subsequent Diels Alder cycloisomerization of the product prosolanapyrone III to solanapyrones A and D. Solanapyrones A and D are then converted into solanapyrones B and E, respectively, by the sol3 dehydrogenase. This is Bifunctional solanapyrone synthase (sol5) from Alternaria solani.